The sequence spans 416 residues: Serine hydroxymethyltransferase 1 (416 aa).

Residues L121 and 125–127 contribute to the (6S)-5,6,7,8-tetrahydrofolate site; that span reads GHL. K229 bears the N6-(pyridoxal phosphate)lysine mark. Residues E245 and 354 to 356 each bind (6S)-5,6,7,8-tetrahydrofolate; that span reads SPF.

Belongs to the SHMT family. In terms of assembly, homodimer. It depends on pyridoxal 5'-phosphate as a cofactor.

The protein localises to the cytoplasm. It carries out the reaction (6R)-5,10-methylene-5,6,7,8-tetrahydrofolate + glycine + H2O = (6S)-5,6,7,8-tetrahydrofolate + L-serine. It participates in one-carbon metabolism; tetrahydrofolate interconversion. The protein operates within amino-acid biosynthesis; glycine biosynthesis; glycine from L-serine: step 1/1. In terms of biological role, catalyzes the reversible interconversion of serine and glycine with tetrahydrofolate (THF) serving as the one-carbon carrier. This reaction serves as the major source of one-carbon groups required for the biosynthesis of purines, thymidylate, methionine, and other important biomolecules. Also exhibits THF-independent aldolase activity toward beta-hydroxyamino acids, producing glycine and aldehydes, via a retro-aldol mechanism. The protein is Serine hydroxymethyltransferase 1 of Vibrio vulnificus (strain CMCP6).